The chain runs to 276 residues: FALAHMVNDFDILKSYMDEGANGIETDITFTSEGEPEKAFHGVPCDCKRWCRRQVGIDDYLRHLSDLTTPGNPKFRDNLVVVVLDLKLNGLSEEALRNGGLRLADKLAAHYWSGNRKARAYFIVSVPKTSESEFMKSFRKELDEINFGEMSAKIGFDFTDNGEFSGTQKVYETLGIDEHIWASDGITNCIPLLFRGISRLEDLIHQRDEPGYKYISKVYAWTYDKESSVTLALSLGVDGVMTNYADFVIGILNKPEHSSKYRLATYEDNPFEKFTA.

H5 is an active-site residue. Mg(2+) contacts are provided by E25 and D27. The active-site Nucleophile is the H41. Disulfide bonds link C45/C51 and C47/C189. Position 85 (D85) interacts with Mg(2+).

It belongs to the arthropod phospholipase D family. Class II subfamily. The cofactor is Mg(2+). As to expression, expressed by the venom gland.

The protein resides in the secreted. It carries out the reaction an N-(acyl)-sphingosylphosphocholine = an N-(acyl)-sphingosyl-1,3-cyclic phosphate + choline. The catalysed reaction is an N-(acyl)-sphingosylphosphoethanolamine = an N-(acyl)-sphingosyl-1,3-cyclic phosphate + ethanolamine. It catalyses the reaction a 1-acyl-sn-glycero-3-phosphocholine = a 1-acyl-sn-glycero-2,3-cyclic phosphate + choline. The enzyme catalyses a 1-acyl-sn-glycero-3-phosphoethanolamine = a 1-acyl-sn-glycero-2,3-cyclic phosphate + ethanolamine. In terms of biological role, dermonecrotic toxins cleave the phosphodiester linkage between the phosphate and headgroup of certain phospholipids (sphingolipid and lysolipid substrates), forming an alcohol (often choline) and a cyclic phosphate. This toxin acts on sphingomyelin (SM). It may also act on ceramide phosphoethanolamine (CPE), lysophosphatidylcholine (LPC) and lysophosphatidylethanolamine (LPE), but not on lysophosphatidylserine (LPS), and lysophosphatidylglycerol (LPG). It acts by transphosphatidylation, releasing exclusively cyclic phosphate products as second products. Induces dermonecrosis, hemolysis, increased vascular permeability, edema, inflammatory response, and platelet aggregation. This Loxosceles aff. spinulosa (strain GJB-2008) (Recluse spider) protein is Dermonecrotic toxin LafSicTox-betaIE2.